Here is a 373-residue protein sequence, read N- to C-terminus: MTDNSKIRVVVGMSGGVDSSVTALLLKEQGYDVIGVFMKNWDDTDEFGVCTATEDYKDVAAVADQIGIPYYSVNFEKEYWDRVFEYFLAEYRAGRTPNPDVMCNKEIKFKAFLDYAMTLGADYVATGHYAQVKRDENGTVYMLRGADNGKDQTYFLSQLSQEQLQKTLFPLGHLQKSEVREIAERAGLATAKKKDSTGICFIGEKNFKQFLSQYLPAQKGRMMTIDGRDMGEHAGLMYYTIGQRGGLGIGGQHGGDNQPWFVVGKDLSQNILYVGQGFYHEALMSNSLDASVIHFTREMPEEFTFECTAKFRYRQPDSQVTVHVREDKAEVVFAEPQRAITPGQAVVFYDGKECLGGGMIDMAYKNGQPCQYI.

ATP is bound by residues 12 to 19 (GMSGGVDS) and M38. Positions 98–100 (NPD) are interaction with target base in tRNA. C103 functions as the Nucleophile in the catalytic mechanism. Cysteines 103 and 200 form a disulfide. G127 provides a ligand contact to ATP. An interaction with tRNA region spans residues 150-152 (KDQ). Catalysis depends on C200, which acts as the Cysteine persulfide intermediate. The segment at 312–313 (RY) is interaction with tRNA.

The protein belongs to the MnmA/TRMU family.

The protein resides in the cytoplasm. The enzyme catalyses S-sulfanyl-L-cysteinyl-[protein] + uridine(34) in tRNA + AH2 + ATP = 2-thiouridine(34) in tRNA + L-cysteinyl-[protein] + A + AMP + diphosphate + H(+). In terms of biological role, catalyzes the 2-thiolation of uridine at the wobble position (U34) of tRNA, leading to the formation of s(2)U34. The chain is tRNA-specific 2-thiouridylase MnmA from Streptococcus pyogenes serotype M2 (strain MGAS10270).